Here is a 298-residue protein sequence, read N- to C-terminus: Lipoyl synthase (298 aa).

Residues Cys-40, Cys-45, Cys-51, Cys-67, Cys-71, Cys-74, and Ser-280 each contribute to the [4Fe-4S] cluster site. A Radical SAM core domain is found at 53–269 (AVRKTATFMI…KEIALSKGFS (217 aa)).

This sequence belongs to the radical SAM superfamily. Lipoyl synthase family. [4Fe-4S] cluster serves as cofactor.

It localises to the cytoplasm. It catalyses the reaction [[Fe-S] cluster scaffold protein carrying a second [4Fe-4S](2+) cluster] + N(6)-octanoyl-L-lysyl-[protein] + 2 oxidized [2Fe-2S]-[ferredoxin] + 2 S-adenosyl-L-methionine + 4 H(+) = [[Fe-S] cluster scaffold protein] + N(6)-[(R)-dihydrolipoyl]-L-lysyl-[protein] + 4 Fe(3+) + 2 hydrogen sulfide + 2 5'-deoxyadenosine + 2 L-methionine + 2 reduced [2Fe-2S]-[ferredoxin]. The protein operates within protein modification; protein lipoylation via endogenous pathway; protein N(6)-(lipoyl)lysine from octanoyl-[acyl-carrier-protein]. Its function is as follows. Catalyzes the radical-mediated insertion of two sulfur atoms into the C-6 and C-8 positions of the octanoyl moiety bound to the lipoyl domains of lipoate-dependent enzymes, thereby converting the octanoylated domains into lipoylated derivatives. This chain is Lipoyl synthase, found in Bacillus cytotoxicus (strain DSM 22905 / CIP 110041 / 391-98 / NVH 391-98).